A 54-amino-acid polypeptide reads, in one-letter code: Light-harvesting protein B-800/850 alpha chain (54 aa).

Over 1 to 14 (MTNGKIWLVVKPTV) the chain is Cytoplasmic. Residues 15-35 (GVPLFLSAAVIASVVIHAAVL) form a helical membrane-spanning segment. H31 provides a ligand contact to a bacteriochlorophyll. Over 36–54 (TTTTWLPAYYQGSAAVAAE) the chain is Periplasmic.

This sequence belongs to the antenna complex alpha subunit family. In terms of assembly, the core complex is formed by different alpha and beta chains, binding bacteriochlorophyll molecules, and arranged most probably in tetrameric structures disposed around the reaction center. The non-pigmented gamma chains may constitute additional components.

Its subcellular location is the cell inner membrane. In terms of biological role, antenna complexes are light-harvesting systems, which transfer the excitation energy to the reaction centers. This is Light-harvesting protein B-800/850 alpha chain (pucA) from Cereibacter sphaeroides (Rhodobacter sphaeroides).